The sequence spans 404 residues: Phosphopentomutase (404 aa).

Mn(2+) is bound by residues Asp10, Asp303, His308, Asp344, His345, and His356.

The protein belongs to the phosphopentomutase family. Requires Mn(2+) as cofactor.

Its subcellular location is the cytoplasm. It carries out the reaction 2-deoxy-alpha-D-ribose 1-phosphate = 2-deoxy-D-ribose 5-phosphate. It catalyses the reaction alpha-D-ribose 1-phosphate = D-ribose 5-phosphate. Its pathway is carbohydrate degradation; 2-deoxy-D-ribose 1-phosphate degradation; D-glyceraldehyde 3-phosphate and acetaldehyde from 2-deoxy-alpha-D-ribose 1-phosphate: step 1/2. Isomerase that catalyzes the conversion of deoxy-ribose 1-phosphate (dRib-1-P) and ribose 1-phosphate (Rib-1-P) to deoxy-ribose 5-phosphate (dRib-5-P) and ribose 5-phosphate (Rib-5-P), respectively. The polypeptide is Phosphopentomutase (Shewanella oneidensis (strain ATCC 700550 / JCM 31522 / CIP 106686 / LMG 19005 / NCIMB 14063 / MR-1)).